Reading from the N-terminus, the 651-residue chain is Endoplasmic reticulum chaperone BiP (651 aa).

The N-terminal stretch at Met-1–Cys-20 is a signal peptide. ATP is bound by residues Gly-36–Tyr-39, Lys-96, Gly-226–Thr-228, Glu-292–Ser-299, and Gly-363–Arg-366. Residues Lys-125–Lys-279 form a nucleotide-binding (NBD) region. Residues Val-399–Thr-499 form a substrate-binding (SBD) region. The Prevents secretion from ER motif lies at Lys-648–Leu-651.

Belongs to the heat shock protein 70 family.

Its subcellular location is the endoplasmic reticulum lumen. The catalysed reaction is ATP + H2O = ADP + phosphate + H(+). Its activity is regulated as follows. The chaperone activity is regulated by ATP-induced allosteric coupling of the nucleotide-binding (NBD) and substrate-binding (SBD) domains. In the ADP-bound and nucleotide-free (apo) states, the two domains have little interaction. In contrast, in the ATP-bound state the two domains are tightly coupled, which results in drastically accelerated kinetics in both binding and release of polypeptide substrates. J domain-containing co-chaperones stimulate the ATPase activity and are required for efficient substrate recognition. Endoplasmic reticulum chaperone that plays a key role in protein folding and quality control in the endoplasmic reticulum lumen. Involved in the correct folding of proteins and degradation of misfolded proteins. Acts as a key repressor of the unfolded protein response (UPR). The protein is Endoplasmic reticulum chaperone BiP of Echinococcus granulosus (Hydatid tapeworm).